The chain runs to 277 residues: Large ribosomal subunit protein uL2 (277 aa).

Disordered stretches follow at residues 37–59 (KNSTGGRNHNGHITTRHRGGGHK) and 221–265 (RGTA…KRTD). The segment covering 50–59 (TTRHRGGGHK) has biased composition (basic residues). Basic and acidic residues predominate over residues 229 to 241 (DHPHGGGEGRTGE).

This sequence belongs to the universal ribosomal protein uL2 family. As to quaternary structure, part of the 50S ribosomal subunit. Forms a bridge to the 30S subunit in the 70S ribosome.

In terms of biological role, one of the primary rRNA binding proteins. Required for association of the 30S and 50S subunits to form the 70S ribosome, for tRNA binding and peptide bond formation. It has been suggested to have peptidyltransferase activity; this is somewhat controversial. Makes several contacts with the 16S rRNA in the 70S ribosome. This Chromobacterium violaceum (strain ATCC 12472 / DSM 30191 / JCM 1249 / CCUG 213 / NBRC 12614 / NCIMB 9131 / NCTC 9757 / MK) protein is Large ribosomal subunit protein uL2.